A 3092-amino-acid polypeptide reads, in one-letter code: Probable polyketide synthase 45 (3092 aa).

Positions 10-430 (DNDVAIIGIG…GSNVCLILTE (421 aa)) constitute a Ketosynthase family 3 (KS3) domain. Catalysis depends on for beta-ketoacyl synthase activity residues Cys170, His315, and His353. Residues 640-673 (GILASISIGHSLGEVSSAVCSGMIDLETGCFIIY) form an acyl/malonyl transferase region. Ser650 (for acyl/malonyl transferase activity) is an active-site residue. Residues 967–1087 (INQLGNRNER…GKFSITKHND (121 aa)) are N-terminal hotdog fold. The PKS/mFAS DH domain maps to 967–1254 (INQLGNRNER…YTQLTPYKNQ (288 aa)). His999 functions as the Proton acceptor; for dehydratase activity in the catalytic mechanism. The interval 1103–1254 (NFVTIQKKEL…YTQLTPYKNQ (152 aa)) is C-terminal hotdog fold. Catalysis depends on Asp1165, which acts as the Proton donor; for dehydratase activity. One can recognise a Carrier domain in the interval 2566 to 2644 (SDDLSIREEI…QLIQSVTDAM (79 aa)). Position 2604 is an O-(pantetheine 4'-phosphoryl)serine (Ser2604). A helical transmembrane segment spans residues 2705-2725 (NTVFLTGSSGFIGIYILFYLI).

It depends on pantetheine 4'-phosphate as a cofactor.

It localises to the membrane. Functionally, probable polyketide synthase. This Dictyostelium discoideum (Social amoeba) protein is Probable polyketide synthase 45 (pks45).